A 319-amino-acid polypeptide reads, in one-letter code: Methyltransferase tpcM (319 aa).

The methyltransferase domain stretch occupies residues 63 to 155 (DVGAGIGPYA…QLRPGGTFAC (93 aa)).

Belongs to the methyltransferase superfamily. In terms of tissue distribution, specifically expressed in conidia.

Its pathway is secondary metabolite biosynthesis. Functionally, methyltransferase; part of the gene cluster that mediates the biosynthesis of trypacidin, a mycotoxin with antiprotozoal activity and that plays a role in the infection process. The pathway begins with the synthesis of atrochrysone thioester by the polyketide synthase (PKS) tpcC. The atrochrysone carboxyl ACP thioesterase tpcB then breaks the thioester bond and releases the atrochrysone carboxylic acid from tpcC. The decarboxylase tpcK converts atrochrysone carboxylic acid to atrochrysone which is further reduced into emodin anthrone. The next step is performed by the emodin anthrone oxygenase tpcL that catalyzes the oxidation of emodinanthrone to emodin. Emodin O-methyltransferase encoded by tpcA catalyzes methylation of the 8-hydroxy group of emodin to form questin. Ring cleavage of questin by questin oxidase tpcI leads to desmethylsulochrin via several intermediates including questin epoxide. Another methylation step catalyzed by tpcM leads to the formation of sulochrin which is further converted to monomethylsulfochrin by tpcH. Finally, the tpcJ catalyzes the conversion of monomethylsulfochrin to trypacidin. Trypacidin is toxic for human pulmonary and bronchial epithelial cells by initiating the intracellular formation of nitric oxide (NO) and hydrogen peroxide (H(2)O(2)), thus triggering host necrotic cell death. The trypacidin pathway is also able to produce endocrocin via a distinct route from the endocrocin Enc pathway. The polypeptide is Methyltransferase tpcM (Aspergillus fumigatus (strain ATCC MYA-4609 / CBS 101355 / FGSC A1100 / Af293) (Neosartorya fumigata)).